The primary structure comprises 157 residues: Protein Smg (157 aa).

It belongs to the Smg family.

This chain is Protein Smg, found in Serratia proteamaculans (strain 568).